A 976-amino-acid chain; its full sequence is 3-hydroxy-3-methylglutaryl-coenzyme A reductase (976 aa).

Residues 1–36 lie on the Lumenal side of the membrane; sequence MDHEGCQGQHPQQCCQWVSNAWSEFLDLLKNAETLD. The 182-residue stretch at 36–217 folds into the SSD domain; it reads DIVIMLLGYI…FTFYTAILSI (182 aa). The chain crosses the membrane as a helical span at residues 37-57; sequence IVIMLLGYIAMHLTFVSLFLS. The Cytoplasmic segment spans residues 58–64; it reads MRKMGSK. The chain crosses the membrane as a helical span at residues 65-85; sequence FWLGICTLFSSVFAFLFGLVV. The Lumenal portion of the chain corresponds to 86-90; it reads TTKLG. The helical transmembrane segment at 91–111 threads the bilayer; it reads VPISVILLSEGLPFLVVTIGF. The Cytoplasmic segment spans residues 112 to 169; the sequence is EKNIVLTRAVMSHAIEHRRIQAQNSKSGKRSPDGSTQNMIQYAVQAAIKEKGFEIIRD. A helical transmembrane segment spans residues 170-190; the sequence is YAIEIVILVIGAASGVQGGLQ. The Lumenal segment spans residues 191-193; that stretch reads QFC. The helical transmembrane segment at 194 to 214 threads the bilayer; that stretch reads FLAAWTLFFDFILLFTFYTAI. At 215–272 the chain is on the cytoplasmic side; that stretch reads LSIKLRSTVSSVMSICVWPLRMMASRRVAENVAKGDDELNRVRGDAPLFGRKSSSIPK. Residues 273-293 traverse the membrane as a helical segment; it reads FKVLMILGFIFVNIVNICSIP. Residues 294 to 401 are Lumenal-facing; it reads FRNPSSMSTI…GGILKSLEDP (108 aa). Residues 402-422 form a helical membrane-spanning segment; it reads VLSKWIVIALALSVALNGYLF. Residues 423–976 lie on the Cytoplasmic side of the membrane; that stretch reads NVARWGIKDP…RYSEVKAIDE (554 aa). The active-site Charge relay system is E618. 624–630 lines the CoA pocket; the sequence is SASRGCK. Residues 685 to 687 and 712 to 720 each bind NADP(+); these read SRF and DAMGMNMIS. K752 acts as the Charge relay system in catalysis. CoA is bound at residue 781–783; that stretch reads VLK. The active-site Charge relay system is the D828. Residue 923–924 coordinates CoA; that stretch reads AH. H924 functions as the Proton donor in the catalytic mechanism. Residues 926–954 form a disordered region; sequence QHNRSAAPSRSTTPGSSHDARLTGHDQCP. 928-929 contacts NADP(+); sequence NR. The span at 928 to 941 shows a compositional bias: polar residues; it reads NRSAAPSRSTTPGS. Positions 943–953 are enriched in basic and acidic residues; that stretch reads HDARLTGHDQC.

It belongs to the HMG-CoA reductase family.

It is found in the endoplasmic reticulum membrane. The enzyme catalyses (R)-mevalonate + 2 NADP(+) + CoA = (3S)-3-hydroxy-3-methylglutaryl-CoA + 2 NADPH + 2 H(+). It participates in metabolic intermediate biosynthesis; (R)-mevalonate biosynthesis; (R)-mevalonate from acetyl-CoA: step 3/3. In terms of biological role, HMG-CoA reductase; part of the first module of ergosterol biosynthesis pathway that includes the early steps of the pathway, conserved across all eukaryotes, and which results in the formation of mevalonate from acetyl-coenzyme A (acetyl-CoA). In this module, the cytosolic acetyl-CoA acetyltransferase catalyzes the formation of acetoacetyl-CoA. The hydroxymethylglutaryl-CoA synthase then condenses acetyl-CoA with acetoacetyl-CoA to form HMG-CoA. The rate-limiting step of the early module is the reduction to mevalonate by the 3-hydroxy-3-methylglutaryl-coenzyme A (HMG-CoA) reductase HMGR. This chain is 3-hydroxy-3-methylglutaryl-coenzyme A reductase, found in Fusarium fujikuroi (Bakanae and foot rot disease fungus).